The primary structure comprises 699 residues: DNA ligase (699 aa).

Residues 47–51, 96–97, and glutamate 128 contribute to the NAD(+) site; these read DAQYD and SL. Lysine 130 acts as the N6-AMP-lysine intermediate in catalysis. Residues arginine 151, glutamate 186, lysine 303, and lysine 327 each coordinate NAD(+). Zn(2+)-binding residues include cysteine 422, cysteine 425, cysteine 440, and cysteine 446. A BRCT domain is found at 620–699; that stretch reads GDNLLLSNQT…EEWIKMVNEL (80 aa).

Belongs to the NAD-dependent DNA ligase family. LigA subfamily. The cofactor is Mg(2+). Requires Mn(2+) as cofactor.

It catalyses the reaction NAD(+) + (deoxyribonucleotide)n-3'-hydroxyl + 5'-phospho-(deoxyribonucleotide)m = (deoxyribonucleotide)n+m + AMP + beta-nicotinamide D-nucleotide.. DNA ligase that catalyzes the formation of phosphodiester linkages between 5'-phosphoryl and 3'-hydroxyl groups in double-stranded DNA using NAD as a coenzyme and as the energy source for the reaction. It is essential for DNA replication and repair of damaged DNA. The protein is DNA ligase of Orientia tsutsugamushi (strain Ikeda) (Rickettsia tsutsugamushi).